Consider the following 737-residue polypeptide: MLKYALHSGGMPRNRLLRQLSAHIFRRSYSSNIRNIGILAHIDAGKTTTTERMLFYSGKTRSLGEVHRGNTVTDYLTQERERGITICSSAVTFPWRGNRINLLDTPGHIDFTMEVEQSLYAVDGVVVVLDGTAGVEAQTVTVWTQADKHKLPRLAFVNKMDRPDADFDKCVNDLRTKLETQPVCIQYPSKNQDGLLTINDVITLEQLTWQPKDLGRSYSKTKLEPSDDLRQLQEKRNELIDQLSGLDDELADVVISTESFDNVSNALIERALRRATCQQKVVPVLLGSAYKNVGIQRLMDAVNTYLPAPEERNQIYDCFGNEVAGKVFKIVHDKQRGPLTLVRILRGEIKRGMRLICSRGQAEVVSKLYEPLADEYREVGAVQSGDVVICAGLKSTVTGDLLTSSQTALRNAQKRLKQSQGTVSPDEDEELDTDELFGIDRQIPDAVYFCSIEPPSVSSQTAMEQALRQLQREDPSLRVSYDSVTGQTVLGGMGELHMDIIKSRILSEYKIDVDLGPLQIAYKETIESPSLTTLSVEKEIAGSKQNVSLTLEVVKDQGELFSLDKSPENLSNLNTLRPRTLQVIRKGSVSALERGPRVGGQVVDTQIRLHNAIIGRGTADSFVMATAAQCVQKLLSTSGTRLLEPIMALQIVAPSERISGIMADLSRRRALINDVLPKGERNKMILVNAPLAELSGYSSALRTISSGTASMTMQPSGFSGMNAVDESLAERRVQGLE.

A mitochondrion-targeting transit peptide spans 1–29 (MLKYALHSGGMPRNRLLRQLSAHIFRRSY). One can recognise a tr-type G domain in the interval 31 to 310 (SNIRNIGILA…AVNTYLPAPE (280 aa)). Residues 40–47 (AHIDAGKT), 104–108 (DTPGH), and 158–161 (NKMD) contribute to the GTP site.

Belongs to the TRAFAC class translation factor GTPase superfamily. Classic translation factor GTPase family. EF-G/EF-2 subfamily.

The protein localises to the mitochondrion. Functionally, mitochondrial GTPase that mediates the disassembly of ribosomes from messenger RNA at the termination of mitochondrial protein biosynthesis. Not involved in the GTP-dependent ribosomal translocation step during translation elongation. The protein is Ribosome-releasing factor 2, mitochondrial of Drosophila pseudoobscura pseudoobscura (Fruit fly).